Reading from the N-terminus, the 473-residue chain is Maltose fermentation regulatory protein MAL13 (473 aa).

Positions cysteine 13–cysteine 39 form a DNA-binding region, zn(2)-C6 fungal-type. The Nuclear localization signal motif lies at arginine 46 to arginine 54.

The protein belongs to the MAL13 family.

It is found in the nucleus. Its function is as follows. Regulates the coordinate transcription of structural MAL1S (maltase) and AGT1 (maltose permease) genes. The chain is Maltose fermentation regulatory protein MAL13 (MAL13) from Saccharomyces cerevisiae (strain ATCC 204508 / S288c) (Baker's yeast).